The following is an 827-amino-acid chain: Cell surface glycoprotein (827 aa).

Residues 1–34 (MTKLKDQTRAILLATLMVTSVFAGAIAFTGSAAA) form the signal peptide. N-linked (Glc...) asparagine glycosylation is present at Asn47. Polar residues predominate over residues 73–102 (PLLTGTAGNSEGVSLDLSSPIPQTTENQPL). Positions 73-111 (PLLTGTAGNSEGVSLDLSSPIPQTTENQPLGTYDVDGSG) are disordered. Asn117, Asn308, Asn313, Asn532, and Asn766 each carry an N-linked (Glc...) asparagine glycan. The interval 755–804 (SEREDTTTSSDNATDTTTTTDGPTETTTTAEPTETTEEPTEETTTSSNTP) is disordered. The span at 761-787 (TTSSDNATDTTTTTDGPTETTTTAEPT) shows a compositional bias: low complexity. Positions 804 to 806 (PGF) match the PGF sorting signal motif. The chain crosses the membrane as a helical span at residues 804–823 (PGFGIAVALVALVGAALLAL).

The protein belongs to the halobacterial S-layer protein family. In terms of processing, O-glycosylated on 4 to 6 threonine residues; glycans consist of Glc-Gal disaccharides. Post-translationally, the N-terminus is not blocked. Cleaved by the archaeosortase ArtA at the C-terminus, with removal of a short hydrophobic segment. In terms of processing, lipidation: Following protein translocation across the membrane, the protein is modified by a derivative of mevalonic acid. Lipid modification is ArtA-dependent and requires the conserved C-terminal PGF motif. Post-translationally, asn-47 and Asn-117 are glycosylated by a pentasaccharide comprising a hexose, 2 hexuronic acids, a methyl ester of a hexuronic acid and mannose. The pentasaccharide is produced in 2 steps: first, a tetrasaccharide is built on dolichol-P and then transferred to the S-layer glycoprotein. Then, the mannose fifth sugar is attached to a distinct molecule of dolichol-P and is transferred to the protein already carrying the tetrasaccharide. The pentasaccharide on Asn-47 was initially thought to contain mannose, galactose, glucose and idose with a relative ratio of 1/3/3/0.2. However, it was later shown that it is not the case. Under low-salt conditions (1.75 M instead of 3.4 M), a tetrasaccharide consisting of a sulfated hexose, 2 hexoses and rhamnose is attached to Asn-532.

The protein localises to the secreted. The protein resides in the cell wall. It is found in the S-layer. Its subcellular location is the cell membrane. Its function is as follows. S-layer protein. The S-layer is a paracrystalline mono-layered assembly of proteins which coat the surface of the cell. The protein is Cell surface glycoprotein (csg) of Haloferax volcanii (strain ATCC 29605 / DSM 3757 / JCM 8879 / NBRC 14742 / NCIMB 2012 / VKM B-1768 / DS2) (Halobacterium volcanii).